Here is a 225-residue protein sequence, read N- to C-terminus: Viral late gene transcription factor 3 (225 aa).

The segment at 7–27 (CSNCKHNGLITESNHEFCIFC) is a zinc-finger region.

Belongs to the nucleo-cytoplasmic large DNA viruses (NCLDVs) VLTF-3 family. As to quaternary structure, interacts with the late transcription elongation factor H5/VLTF-4. Interacts with the late transcription factors VLTF-1.

Its function is as follows. Acts with RNA polymerase to initiate transcription from late gene promoters. The polypeptide is Viral late gene transcription factor 3 (VLTF3) (Fowlpox virus (strain NVSL) (FPV)).